The primary structure comprises 117 residues: Large ribosomal subunit protein bL19 (117 aa).

Belongs to the bacterial ribosomal protein bL19 family.

Its function is as follows. This protein is located at the 30S-50S ribosomal subunit interface and may play a role in the structure and function of the aminoacyl-tRNA binding site. The polypeptide is Large ribosomal subunit protein bL19 (Phocaeicola vulgatus (strain ATCC 8482 / DSM 1447 / JCM 5826 / CCUG 4940 / NBRC 14291 / NCTC 11154) (Bacteroides vulgatus)).